Here is a 262-residue protein sequence, read N- to C-terminus: Putative carbamate hydrolase RutD (262 aa).

Belongs to the AB hydrolase superfamily. Hydrolase RutD family.

It carries out the reaction carbamate + 2 H(+) = NH4(+) + CO2. In terms of biological role, involved in pyrimidine catabolism. May facilitate the hydrolysis of carbamate, a reaction that can also occur spontaneously. This is Putative carbamate hydrolase RutD from Rhizobium rhizogenes (strain K84 / ATCC BAA-868) (Agrobacterium radiobacter).